Reading from the N-terminus, the 256-residue chain is Undecaprenyl-diphosphatase (256 aa).

The next 7 membrane-spanning stretches (helical) occupy residues 8 to 28, 41 to 61, 75 to 95, 96 to 116, 175 to 195, 208 to 228, and 236 to 256; these read VLGI…GHLI, FVKS…VVLY, IIAA…LIKG, FLIG…IILI, AEFS…YDLI, ILII…KWFL, and LKIF…FFLF.

Belongs to the UppP family.

The protein resides in the cell inner membrane. It carries out the reaction di-trans,octa-cis-undecaprenyl diphosphate + H2O = di-trans,octa-cis-undecaprenyl phosphate + phosphate + H(+). In terms of biological role, catalyzes the dephosphorylation of undecaprenyl diphosphate (UPP). Confers resistance to bacitracin. This chain is Undecaprenyl-diphosphatase, found in Aquifex aeolicus (strain VF5).